The following is a 738-amino-acid chain: Catalase-peroxidase 2 (738 aa).

The signal sequence occupies residues 1 to 26 (MKRTLPTLSALALSMSLALAAGQTQA). Residues 104 to 226 (WHSAGVYRIF…LGATQMGLIY (123 aa)) constitute a cross-link (tryptophyl-tyrosyl-methioninium (Trp-Tyr) (with M-252)). His-105 functions as the Proton acceptor in the catalytic mechanism. The segment at residues 226–252 (YVNPEGPNGVPDPLAAARDIRETFGRM) is a cross-link (tryptophyl-tyrosyl-methioninium (Tyr-Met) (with W-104)). A heme b-binding site is contributed by His-267.

The protein belongs to the peroxidase family. Peroxidase/catalase subfamily. Homodimer or homotetramer. Heme b serves as cofactor. Formation of the three residue Trp-Tyr-Met cross-link is important for the catalase, but not the peroxidase activity of the enzyme.

It catalyses the reaction H2O2 + AH2 = A + 2 H2O. The catalysed reaction is 2 H2O2 = O2 + 2 H2O. Its function is as follows. Bifunctional enzyme with both catalase and broad-spectrum peroxidase activity. This is Catalase-peroxidase 2 from Shewanella amazonensis (strain ATCC BAA-1098 / SB2B).